A 364-amino-acid polypeptide reads, in one-letter code: Phospho-N-acetylmuramoyl-pentapeptide-transferase (364 aa).

10 helical membrane-spanning segments follow: residues 18 to 38 (SLLI…AQIL), 48 to 68 (LFPL…VVPV), 91 to 111 (GTPT…ALIW), 114 to 134 (LDPA…IGWI), 154 to 174 (LILQ…TQSA), 183 to 203 (GQII…VLVA), 214 to 234 (VDGL…ALMA), 237 to 257 (NPGL…FIVH), 280 to 300 (AIGI…IFFV), and 343 to 363 (TQIV…AVIS).

It belongs to the glycosyltransferase 4 family. MraY subfamily. Mg(2+) is required as a cofactor.

It localises to the cell inner membrane. The enzyme catalyses UDP-N-acetyl-alpha-D-muramoyl-L-alanyl-gamma-D-glutamyl-meso-2,6-diaminopimeloyl-D-alanyl-D-alanine + di-trans,octa-cis-undecaprenyl phosphate = di-trans,octa-cis-undecaprenyl diphospho-N-acetyl-alpha-D-muramoyl-L-alanyl-D-glutamyl-meso-2,6-diaminopimeloyl-D-alanyl-D-alanine + UMP. The protein operates within cell wall biogenesis; peptidoglycan biosynthesis. Functionally, catalyzes the initial step of the lipid cycle reactions in the biosynthesis of the cell wall peptidoglycan: transfers peptidoglycan precursor phospho-MurNAc-pentapeptide from UDP-MurNAc-pentapeptide onto the lipid carrier undecaprenyl phosphate, yielding undecaprenyl-pyrophosphoryl-MurNAc-pentapeptide, known as lipid I. The chain is Phospho-N-acetylmuramoyl-pentapeptide-transferase from Rippkaea orientalis (strain PCC 8801 / RF-1) (Cyanothece sp. (strain PCC 8801)).